Reading from the N-terminus, the 297-residue chain is uncharacterized protein (297 aa).

6 consecutive transmembrane segments (helical) span residues 26-48, 80-102, 134-156, 185-205, 225-247, and 262-284; these read FVLH…IYAI, NIEL…AALF, LFKF…INLG, LGIF…AIVI, LVDT…VAAY, and LVAV…VELY.

Its subcellular location is the cell membrane. This is an uncharacterized protein from Archaeoglobus fulgidus (strain ATCC 49558 / DSM 4304 / JCM 9628 / NBRC 100126 / VC-16).